The primary structure comprises 306 residues: Phenylcoumaran benzylic ether reductase POP1 (306 aa).

NADP(+)-binding positions include 9–15, arginine 34, and lysine 43; that span reads GGTGYIG. Catalysis depends on lysine 131, which acts as the Proton acceptor. Arginine 135 serves as a coordination point for NADP(+).

The protein belongs to the NmrA-type oxidoreductase family. Isoflavone reductase subfamily.

The catalysed reaction is (-)-dehydrodiconiferyl alcohol + NADPH + H(+) = (S)-isodihydrodehydrodiconiferyl alcohol + NADP(+). It catalyses the reaction (+)-dehydrodiconiferyl alcohol + NADPH + H(+) = (R)-isodihydrodehydrodiconiferyl alcohol + NADP(+). It carries out the reaction (2R,3S)-dihydrodehydrodiconiferyl alcohol + NADPH + H(+) = (S)-tetrahydrodehydrodiconiferyl alcohol + NADP(+). The enzyme catalyses (2S,3R)-dihydrodehydrodiconiferyl alcohol + NADPH + H(+) = (R)-tetrahydrodehydrodiconiferyl alcohol + NADP(+). Its function is as follows. Oxidoreductase involved in lignan biosynthesis. Catalyzes the NADPH-dependent reduction of phenylcoumaran benzylic ethers. Converts dehydrodiconiferyl alcohol (DDC) to isodihydrodehydrodiconiferyl alcohol (IDDDC), and dihydrodehydrodiconiferyl alcohol (DDDC) to tetrahydrodehydrodiconiferyl alcohol (TDDC). The protein is Phenylcoumaran benzylic ether reductase POP1 of Populus trichocarpa (Western balsam poplar).